Consider the following 125-residue polypeptide: Profilin-A (125 aa).

N-acetylserine is present on serine 2.

Belongs to the profilin family. Occurs in many kinds of cells as a complex with monomeric actin in a 1:1 ratio.

It localises to the cytoplasm. It is found in the cytoskeleton. In terms of biological role, binds to actin and affects the structure of the cytoskeleton. At high concentrations, profilin prevents the polymerization of actin, whereas it enhances it at low concentrations. By binding to PIP2, it inhibits the formation of IP3 and DG. This Physarum polycephalum (Slime mold) protein is Profilin-A (PROA).